We begin with the raw amino-acid sequence, 124 residues long: Nascent polypeptide-associated complex protein (124 aa).

The NAC-A/B domain occupies 7–74; the sequence is GLNPRKMKQM…PESRERGDSG (68 aa). The interval 53–124 is disordered; that stretch reads AQGQQTYQVV…DLAAAVQKLE (72 aa). Positions 74 to 93 are enriched in acidic residues; the sequence is GSEDDSETESGGEFSEDDVE.

This sequence belongs to the NAC-alpha family. In terms of assembly, homodimer. Interacts with the ribosome. Binds ribosomal RNA.

Functionally, contacts the emerging nascent chain on the ribosome. The chain is Nascent polypeptide-associated complex protein from Natronomonas pharaonis (strain ATCC 35678 / DSM 2160 / CIP 103997 / JCM 8858 / NBRC 14720 / NCIMB 2260 / Gabara) (Halobacterium pharaonis).